We begin with the raw amino-acid sequence, 355 residues long: Probable dual-specificity RNA methyltransferase RlmN (355 aa).

Catalysis depends on glutamate 107, which acts as the Proton acceptor. The Radical SAM core domain maps to 113–341 (TDKRLTVCVS…VSVRYSRGLE (229 aa)). Residues cysteine 120 and cysteine 346 are joined by a disulfide bond. 3 residues coordinate [4Fe-4S] cluster: cysteine 127, cysteine 131, and cysteine 134. S-adenosyl-L-methionine contacts are provided by residues 174 to 175 (GE), serine 204, 227 to 229 (SLH), and asparagine 303. The active-site S-methylcysteine intermediate is cysteine 346.

This sequence belongs to the radical SAM superfamily. RlmN family. The cofactor is [4Fe-4S] cluster.

The protein resides in the cytoplasm. It catalyses the reaction adenosine(2503) in 23S rRNA + 2 reduced [2Fe-2S]-[ferredoxin] + 2 S-adenosyl-L-methionine = 2-methyladenosine(2503) in 23S rRNA + 5'-deoxyadenosine + L-methionine + 2 oxidized [2Fe-2S]-[ferredoxin] + S-adenosyl-L-homocysteine. The catalysed reaction is adenosine(37) in tRNA + 2 reduced [2Fe-2S]-[ferredoxin] + 2 S-adenosyl-L-methionine = 2-methyladenosine(37) in tRNA + 5'-deoxyadenosine + L-methionine + 2 oxidized [2Fe-2S]-[ferredoxin] + S-adenosyl-L-homocysteine. In terms of biological role, specifically methylates position 2 of adenine 2503 in 23S rRNA and position 2 of adenine 37 in tRNAs. The polypeptide is Probable dual-specificity RNA methyltransferase RlmN (Trichormus variabilis (strain ATCC 29413 / PCC 7937) (Anabaena variabilis)).